The sequence spans 156 residues: Small ribosomal subunit protein uS7 (156 aa).

It belongs to the universal ribosomal protein uS7 family. In terms of assembly, part of the 30S ribosomal subunit. Contacts proteins S9 and S11.

Functionally, one of the primary rRNA binding proteins, it binds directly to 16S rRNA where it nucleates assembly of the head domain of the 30S subunit. Is located at the subunit interface close to the decoding center, probably blocks exit of the E-site tRNA. This is Small ribosomal subunit protein uS7 from Solidesulfovibrio magneticus (strain ATCC 700980 / DSM 13731 / RS-1) (Desulfovibrio magneticus).